Consider the following 313-residue polypeptide: Dihydroorotate dehydrogenase (fumarate) (313 aa).

Residues alanine 20 and 44–45 (KS) contribute to the FMN site. Substrate-binding positions include lysine 44, 68–72 (NSMGL), and asparagine 128. An FMN-binding site is contributed by asparagine 128. Residue cysteine 131 is the Nucleophile of the active site. Asparagine 133 contributes to the substrate binding site. The FMN site is built by lysine 165 and valine 194. 195–196 (NS) lines the substrate pocket. FMN-binding positions include glycine 223, cysteine 249, 249–251 (CGG), and 272–273 (GT).

Belongs to the dihydroorotate dehydrogenase family. Type 1 subfamily. Homodimer. The cofactor is FMN.

It is found in the cytoplasm. The enzyme catalyses (S)-dihydroorotate + fumarate = orotate + succinate. Its pathway is pyrimidine metabolism; UMP biosynthesis via de novo pathway. Functionally, catalyzes the conversion of dihydroorotate to orotate with fumarate as the electron acceptor. Molecular oxygen can replace fumarate in vitro. This chain is Dihydroorotate dehydrogenase (fumarate), found in Trypanosoma brucei brucei (strain 927/4 GUTat10.1).